The primary structure comprises 356 residues: Putative transposase y4zB (356 aa).

Positions 1 to 19 (MITTGTPTTRRSAAGTAGA) are enriched in low complexity. Disordered stretches follow at residues 1–54 (MITT…PLAD) and 334–356 (PPPVNPSHRRPRCSPHQMSFAYV).

The protein belongs to the transposase 11 family.

This chain is Putative transposase y4zB, found in Sinorhizobium fredii (strain NBRC 101917 / NGR234).